A 156-amino-acid polypeptide reads, in one-letter code: Small ribosomal subunit protein uS7 (156 aa).

This sequence belongs to the universal ribosomal protein uS7 family. Part of the 30S ribosomal subunit. Contacts proteins S9 and S11.

Its function is as follows. One of the primary rRNA binding proteins, it binds directly to 16S rRNA where it nucleates assembly of the head domain of the 30S subunit. Is located at the subunit interface close to the decoding center, probably blocks exit of the E-site tRNA. The chain is Small ribosomal subunit protein uS7 from Neisseria meningitidis serogroup C (strain 053442).